The chain runs to 464 residues: Histidine--tRNA ligase (464 aa).

Belongs to the class-II aminoacyl-tRNA synthetase family. In terms of assembly, homodimer.

Its subcellular location is the cytoplasm. It catalyses the reaction tRNA(His) + L-histidine + ATP = L-histidyl-tRNA(His) + AMP + diphosphate + H(+). This is Histidine--tRNA ligase from Stenotrophomonas maltophilia (strain K279a).